The primary structure comprises 542 residues: Phenylalanine--tRNA ligase beta subunit (542 aa).

The B5 domain occupies 269 to 344 (LRRYTVSVSA…MTIGYDKLSP (76 aa)). Mg(2+) is bound by residues Asp322, Asp328, Glu331, and Glu332.

This sequence belongs to the phenylalanyl-tRNA synthetase beta subunit family. Type 2 subfamily. Tetramer of two alpha and two beta subunits. Requires Mg(2+) as cofactor.

The protein localises to the cytoplasm. It catalyses the reaction tRNA(Phe) + L-phenylalanine + ATP = L-phenylalanyl-tRNA(Phe) + AMP + diphosphate + H(+). The chain is Phenylalanine--tRNA ligase beta subunit from Sulfolobus acidocaldarius (strain ATCC 33909 / DSM 639 / JCM 8929 / NBRC 15157 / NCIMB 11770).